The sequence spans 683 residues: MNIRMGTKGKRPLRSLTPRDKIHAIQRIHDGESKASVARDIGVPESTLRGWCKNEDKLRFMSRQSTTDKMCADALADKLDVSTGLLGPPEKRQRIDPSLPLNFSNKMKFDELGFKRAPLNGLDYSTNKNISELNYNGLAVDYVGFNGQHKVFSGDINRPANPSPNAISPLSSLTHLSGLTGLSQSPLAISFNELTTNLNLLAQLNPSLAAMSGLNSFPTTANNLRNSKPSVQPPLQVQSPRSDSGDRTPGLSVKNWAKQKPLSAVSSDVSCSINLTIKNEAKGGDIKSPSPSIAPSHVGSIISLSNLAEDPLLYWLKSQQTMLGLNSLYPPMGMTSPPIRSSTPQHIIQHAQTPPLPSAPLTPSSTPSGSLDEKNVAWYNWCKVFGASLNTLNPNSATLAALQANSLQHQHQPISAVSDGTDIADTSKGPFDNILYSHLTKESETPSVRSLSSNEHNQLDQIEGDEVTDPDLDAEIEGDVPGKPEDLSASAKRITPSQSPIASLVPESHTTEPCAKTSTTPSDCISRPGSVGGDCKKILDNMLYKIGGIKSHMPTIVDTACESEASFINEHNQHSNNNDISASNNNNNNSNKTDEEEKAKYLDLTGDNEDVKAIRHGEKFLQWLENCSNPRVTAVQLMQLRFLIAAIKSSNEPQVTEKPNKDLLENEENTEEDSCRNKIRRRK.

The HTH psq-type domain maps to 7-58 (TKGKRPLRSLTPRDKIHAIQRIHDGESKASVARDIGVPESTLRGWCKNEDKL). The H-T-H motif DNA-binding region spans 34 to 54 (KASVARDIGVPESTLRGWCKN). 5 disordered regions span residues 220-255 (TANN…SVKN), 336-369 (SPPI…TPSG), 443-525 (SETP…SDCI), 572-597 (NQHS…DEEE), and 652-683 (EPQV…RRRK). The span at 227–242 (SKPSVQPPLQVQSPRS) shows a compositional bias: low complexity. Composition is skewed to polar residues over residues 338 to 352 (PIRS…QHAQ) and 445 to 460 (TPSV…NQLD). Residues 462–478 (IEGDEVTDPDLDAEIEG) are compositionally biased toward acidic residues. Residues 575–591 (SNNNDISASNNNNNNSN) show a composition bias toward low complexity.

Homomers. Interacts with itself, danr, ey and dac to form a complex (or complexes) containing the RD factors.

It is found in the nucleus. Its function is as follows. Probable transcription factor with a role in the retinal determination (RD) network. Regulates ato expression and is required for normal R8 induction and differentiation. Danr appears to repress Dan expression, but Dan is required for Danr expression anterior to the morphogenetic furrow (MF). Dan and Danr lie downstream of so and require dac function for highest levels of expression. Contributes to differentiation of antenna-specific characteristics; effector gene that acts downstream of homothorax (hth), Distal-less (Dll), cut (ct) and spineless (ss) genes to control differentiation of distal antennal structures. The chain is Protein distal antenna from Drosophila pseudoobscura pseudoobscura (Fruit fly).